A 1450-amino-acid polypeptide reads, in one-letter code: Inactive serine/threonine-protein kinase TEX14 (1450 aa).

3 ANK repeats span residues 27–54, 55–84, and 88–117; these read LHEY…AVNT, QGQS…DPNH, and DGST…DLRL. Phosphoserine is present on residues S175 and S186. Residues 199 to 512 form the Protein kinase domain; it reads IISAQNIYSF…ILKNDLKEFI (314 aa). ATP contacts are provided by residues 205-213 and K267; that span reads IYSFGFGKF. The residue at position 431 (S431) is a Phosphoserine; by PLK1. A phosphoserine mark is found at S561 and S662. The segment at 700–720 is disordered; the sequence is SDSLGSLNLPEPTREAKGKTS. Residues 791–797 carry the GPPX3Y motif; the sequence is GPPSLAY. Disordered regions lie at residues 852 to 906, 947 to 977, 992 to 1012, and 1035 to 1062; these read VSEE…MASV, PPWN…RGPE, DEPK…DKNK, and QPEQ…SSPI. Composition is skewed to polar residues over residues 875–886 and 894–906; these read KQSTGEQLPSTQ and KNTN…MASV. Residues 889 to 897 carry the D-box motif; the sequence is RESLEKNTN. The segment covering 992–1011 has biased composition (basic and acidic residues); the sequence is DEPKGNTKFGKMDNSDCDKN. Positions 1038–1061 are enriched in polar residues; that stretch reads QNEASQASCDTSVGTEKFYSTSSP. Phosphoserine is present on residues S1060 and S1221. Disordered regions lie at residues 1261–1282 and 1300–1418; these read THAT…QQHL and KQQQ…SLGT. Polar residues-rich tracts occupy residues 1300–1311 and 1332–1344; these read KQQQVSSLASHE and TNSS…LSSR. Residues S1357 and S1358 each carry the phosphoserine modification. 2 stretches are compositionally biased toward basic and acidic residues: residues 1383 to 1397 and 1404 to 1413; these read STRE…VVEQ and SIKPERRESD. A phosphoserine mark is found at S1412 and S1449.

It belongs to the protein kinase superfamily. In terms of assembly, interacts with KIF23 and RBM44. Interacts with CEP55; inhibiting interaction between CEP55 and PDCD6IP/ALIX and TSG101. Post-translationally, phosphorylated on Thr residues by CDK1 during early phases of mitosis, promoting the interaction with PLK1 and recruitment to kinetochores. Phosphorylated on Ser-431 by PLK1 during late prometaphase promotes the rapid depletion from kinetochores and its subsequent degradation by the APC/C complex. As to expression, detected in testis and spermatogonia. Not detectable in the other tissues tested.

Its subcellular location is the cytoplasm. It is found in the midbody. The protein localises to the chromosome. The protein resides in the centromere. It localises to the kinetochore. Its function is as follows. Required both for the formation of intercellular bridges during meiosis and for kinetochore-microtubule attachment during mitosis. Intercellular bridges are evolutionarily conserved structures that connect differentiating germ cells and are required for spermatogenesis and male fertility. Acts by promoting the conversion of midbodies into intercellular bridges via its interaction with CEP55: interaction with CEP55 inhibits the interaction between CEP55 and PDCD6IP/ALIX and TSG101, blocking cell abscission and leading to transform midbodies into intercellular bridges. Also plays a role during mitosis: recruited to kinetochores by PLK1 during early mitosis and regulates the maturation of the outer kinetochores and microtubule attachment. Has no protein kinase activity in vitro. In Mus musculus (Mouse), this protein is Inactive serine/threonine-protein kinase TEX14 (Tex14).